Reading from the N-terminus, the 410-residue chain is Argininosuccinate synthase (410 aa).

Residue 9–17 participates in ATP binding; it reads AYSGGLDTS. Position 86 (Y86) interacts with L-citrulline. G116 contributes to the ATP binding site. T118, N122, and D123 together coordinate L-aspartate. An L-citrulline-binding site is contributed by N122. Residues R126, S174, E259, and Y271 each contribute to the L-citrulline site.

The protein belongs to the argininosuccinate synthase family. Type 1 subfamily. In terms of assembly, homotetramer.

The protein resides in the cytoplasm. It catalyses the reaction L-citrulline + L-aspartate + ATP = 2-(N(omega)-L-arginino)succinate + AMP + diphosphate + H(+). Its pathway is amino-acid biosynthesis; L-arginine biosynthesis; L-arginine from L-ornithine and carbamoyl phosphate: step 2/3. In Limosilactobacillus reuteri (strain DSM 20016) (Lactobacillus reuteri), this protein is Argininosuccinate synthase.